Here is a 281-residue protein sequence, read N- to C-terminus: Cytochrome c oxidase subunit 3 (281 aa).

At 1-15 (MTHQTHAYHMVNPSP) the chain is on the mitochondrial matrix side. The helical transmembrane segment at 16–34 (WPLTGALSALLLTSGLIMW) threads the bilayer. Topologically, residues 35-40 (FHYNSS) are mitochondrial intermembrane. The chain crosses the membrane as a helical span at residues 41-66 (TLMFMGLTTMLLTMYQWWRDIIREGT). The Mitochondrial matrix portion of the chain corresponds to 67-72 (FQGHHT). A helical transmembrane segment spans residues 73–105 (PVVQKGLRYGMILFILSEVFFFIGFFWAFYHSS). Over 106–128 (LAPTPELGGCWPPTGIHPLNPLE) the chain is Mitochondrial intermembrane. A helical transmembrane segment spans residues 129 to 152 (VPLLNTSILLASGVSITWAHHSLM). The Mitochondrial matrix portion of the chain corresponds to 153 to 155 (EGN). Residues 156-183 (RKQMIQALLITISLGLYFTILQAMEYYE) traverse the membrane as a helical segment. Topologically, residues 184 to 190 (ASFTISD) are mitochondrial intermembrane. The helical transmembrane segment at 191-223 (GVYGSTFFVATGFHGLHVIIGSTFLIVCLLRQL) threads the bilayer. The Mitochondrial matrix segment spans residues 224 to 232 (FYHFTSTHH). The helical transmembrane segment at 233-256 (FGFEAAAWYWHFVDVVWLFLYVSI) threads the bilayer. The Mitochondrial intermembrane portion of the chain corresponds to 257 to 281 (YWWGSYFSSMISTTDFQSLSSGSNQ).

This sequence belongs to the cytochrome c oxidase subunit 3 family. In terms of assembly, component of the cytochrome c oxidase (complex IV, CIV), a multisubunit enzyme composed of 14 subunits. The complex is composed of a catalytic core of 3 subunits MT-CO1, MT-CO2 and MT-CO3, encoded in the mitochondrial DNA, and 11 supernumerary subunits COX4I, COX5A, COX5B, COX6A, COX6B, COX6C, COX7A, COX7B, COX7C, COX8 and NDUFA4, which are encoded in the nuclear genome. The complex exists as a monomer or a dimer and forms supercomplexes (SCs) in the inner mitochondrial membrane with NADH-ubiquinone oxidoreductase (complex I, CI) and ubiquinol-cytochrome c oxidoreductase (cytochrome b-c1 complex, complex III, CIII), resulting in different assemblies (supercomplex SCI(1)III(2)IV(1) and megacomplex MCI(2)III(2)IV(2)).

It is found in the mitochondrion inner membrane. It carries out the reaction 4 Fe(II)-[cytochrome c] + O2 + 8 H(+)(in) = 4 Fe(III)-[cytochrome c] + 2 H2O + 4 H(+)(out). Component of the cytochrome c oxidase, the last enzyme in the mitochondrial electron transport chain which drives oxidative phosphorylation. The respiratory chain contains 3 multisubunit complexes succinate dehydrogenase (complex II, CII), ubiquinol-cytochrome c oxidoreductase (cytochrome b-c1 complex, complex III, CIII) and cytochrome c oxidase (complex IV, CIV), that cooperate to transfer electrons derived from NADH and succinate to molecular oxygen, creating an electrochemical gradient over the inner membrane that drives transmembrane transport and the ATP synthase. Cytochrome c oxidase is the component of the respiratory chain that catalyzes the reduction of oxygen to water. Electrons originating from reduced cytochrome c in the intermembrane space (IMS) are transferred via the dinuclear copper A center (CU(A)) of subunit 2 and heme A of subunit 1 to the active site in subunit 1, a binuclear center (BNC) formed by heme A3 and copper B (CU(B)). The BNC reduces molecular oxygen to 2 water molecules using 4 electrons from cytochrome c in the IMS and 4 protons from the mitochondrial matrix. This chain is Cytochrome c oxidase subunit 3 (MT-CO3), found in Didelphis virginiana (North American opossum).